A 290-amino-acid polypeptide reads, in one-letter code: 4-hydroxybenzoate octaprenyltransferase (290 aa).

Helical transmembrane passes span 33–53 (LWALWVATPGVPPLWILAVFV), 99–119 (LFVVLVLLAFLLVLTLNTMTI), 141–161 (LPQVVLGAAFGWSIPMAFAAV), 163–183 (ESVPLSCWLMFLANILWAVAY), 213–233 (FIIGVLQIGVMVLMALIGWLN), 237–257 (WGYYWSILVAGGLFVYQQKLI), and 268–288 (AFMNNNYVGLVLFLGLAMSYW).

It belongs to the UbiA prenyltransferase family. The cofactor is Mg(2+).

Its subcellular location is the cell inner membrane. It carries out the reaction all-trans-octaprenyl diphosphate + 4-hydroxybenzoate = 4-hydroxy-3-(all-trans-octaprenyl)benzoate + diphosphate. It functions in the pathway cofactor biosynthesis; ubiquinone biosynthesis. Its function is as follows. Catalyzes the prenylation of para-hydroxybenzoate (PHB) with an all-trans polyprenyl group. Mediates the second step in the final reaction sequence of ubiquinone-8 (UQ-8) biosynthesis, which is the condensation of the polyisoprenoid side chain with PHB, generating the first membrane-bound Q intermediate 3-octaprenyl-4-hydroxybenzoate. This Escherichia fergusonii (strain ATCC 35469 / DSM 13698 / CCUG 18766 / IAM 14443 / JCM 21226 / LMG 7866 / NBRC 102419 / NCTC 12128 / CDC 0568-73) protein is 4-hydroxybenzoate octaprenyltransferase.